The sequence spans 760 residues: MATRGGGGGGGGKEAKGKVMGPLFPRLHVNDAAKGGGPRAPPRNKMALYEQFTVPSHRFSGGGGGGGVGGSPAHSTSAASQSQSQSQVYGRDSSLFQPFNVPSNRPGHSTEKINSDKINKKISGSRKELGMLSSQTKGMDIYASRSTAEAPQRRAENTIKSSSGKRLADDDEFMVPSVFNSRFPQYSTQENAGVQDQSTPLVAANPHKSPSTVSKSSTKCYNTVSKKLERIHVSDVKSRTPLKDKEMEAAQTSKNVEVEKSSSFHASKDMFESRHAKVYPKMDKTGIINDSDEPHGGNSGHQATSRNGGSMKFQNPPMRRNEISSNPSSENTDRHYNLPQGGIEETGTKRKRLLEQHDAEKSDDVSRLLEQHDAENIDDVSDSSVECITGWEISPDKIVGAIGTKHFWKARRAIMNQQRVFAVQVFELHKLVKVQKLIAASPHVLIESDPCLGNALLGSKNKLVEENLKAQPLLVATIDDVEPSLQQPEVSKENTEDSPPSPHDTGLGSGQRDQAATNGVSKSNRRATPVASDNKQNNWGVQLQPPQNQWLVPVMSPLEGLVYKPYSGPCPPAGSILAPFYANCTPLSLPSTAGDFMNSAYGVPMPHQPQHMGAPGPPSMPMNYFPPFSIPVMNPTAPAPVVEQGRHPSMPQPYGNFEQQSWISCNMSHPSGIWRFHASRDSEAQASSASSPFDRFQCSGSGPVSAFPTVSAQNNQPQPSYSSRDNQTNVIKVVPHNSRTASESAARIFRSIQMERQRDD.

Composition is skewed to gly residues over residues 1–12 and 60–70; these read MATRGGGGGGGG and SGGGGGGGVGG. Disordered stretches follow at residues 1 to 120, 144 to 169, 236 to 262, and 285 to 346; these read MATR…KINK, SRST…RLAD, VKSR…EKSS, and TGII…IEET. Positions 71 to 87 are enriched in low complexity; it reads SPAHSTSAASQSQSQSQ. The segment covering 94 to 107 has biased composition (polar residues); that stretch reads SLFQPFNVPSNRPG. A compositionally biased stretch (basic and acidic residues) spans 108 to 120; sequence HSTEKINSDKINK. The segment covering 236-248 has biased composition (basic and acidic residues); that stretch reads VKSRTPLKDKEME. A Nuclear localization signal motif is present at residues 349–355; it reads KRKRLLE. Disordered regions lie at residues 485–543 and 707–760; these read LQQP…GVQL and FPTV…QRDD. Polar residues-rich tracts occupy residues 511–522, 531–543, and 707–730; these read QRDQAATNGVSK, ASDN…GVQL, and FPTV…QTNV.

Expressed in mesophyll cells of young leaves, anthers, stigmas and the top of lemmas.

The protein localises to the nucleus. In terms of biological role, involved in the regulation of flowering time under short day (SD) and long day (LD) conditions. Functions as a floral promoter by negatively regulating GHD7, a repressor of the photoperiodic control of flowering. Acts as a floral activator in the LD photoperiodic pathway. Involved in blue light-induced activation of EHD1 expression to promote flowering under SD conditions. The polypeptide is Protein HEADING DATE 3B (HD3B) (Oryza sativa subsp. japonica (Rice)).